The chain runs to 175 residues: Hypoxanthine-guanine phosphoribosyltransferase (175 aa).

Diphosphate is bound by residues lysine 40 and glycine 41. Residues glutamate 96 and aspartate 97 each contribute to the Mg(2+) site. Aspartate 100 serves as the catalytic Proton acceptor. GMP is bound by residues lysine 128, phenylalanine 149–leucine 150, and aspartate 156. Residue arginine 162 coordinates diphosphate.

The protein belongs to the purine/pyrimidine phosphoribosyltransferase family. Mg(2+) is required as a cofactor.

The protein resides in the cytoplasm. The catalysed reaction is IMP + diphosphate = hypoxanthine + 5-phospho-alpha-D-ribose 1-diphosphate. It carries out the reaction GMP + diphosphate = guanine + 5-phospho-alpha-D-ribose 1-diphosphate. It participates in purine metabolism; IMP biosynthesis via salvage pathway; IMP from hypoxanthine: step 1/1. The protein operates within purine metabolism; GMP biosynthesis via salvage pathway; GMP from guanine: step 1/1. Purine salvage pathway enzyme that catalyzes the transfer of the ribosyl-5-phosphate group from 5-phospho-alpha-D-ribose 1-diphosphate (PRPP) to the N9 position of the 6-oxopurines hypoxanthine and guanine to form the corresponding ribonucleotides IMP (inosine 5'-monophosphate) and GMP (guanosine 5'-monophosphate), with the release of PPi. The polypeptide is Hypoxanthine-guanine phosphoribosyltransferase (hpt) (Mycoplasma pneumoniae (strain ATCC 29342 / M129 / Subtype 1) (Mycoplasmoides pneumoniae)).